The sequence spans 387 residues: Phosphoglycerate kinase (387 aa).

Residues 21–23 (DLN), Arg-36, 59–62 (HLGR), Arg-113, and Arg-146 contribute to the substrate site. Residues Lys-197, Glu-314, and 340-343 (GGDT) contribute to the ATP site.

The protein belongs to the phosphoglycerate kinase family. Monomer.

The protein localises to the cytoplasm. It carries out the reaction (2R)-3-phosphoglycerate + ATP = (2R)-3-phospho-glyceroyl phosphate + ADP. It participates in carbohydrate degradation; glycolysis; pyruvate from D-glyceraldehyde 3-phosphate: step 2/5. The chain is Phosphoglycerate kinase from Tolumonas auensis (strain DSM 9187 / NBRC 110442 / TA 4).